The sequence spans 741 residues: Homeobox protein AHox1 (741 aa).

Disordered stretches follow at residues 1–30 (MEKM…KSSS), 61–96 (KRRL…NFCR), 146–183 (VNPL…KSCC), 203–226 (ADSD…INQD), 357–383 (KTEE…PIRT), 476–501 (FDFP…NPQT), and 616–642 (QYGH…GTVK). The segment covering 7–19 (KSVSPVPFNNSNN) has biased composition (low complexity). Over residues 63–78 (RLLDPQNKKKQNRFER) the composition is skewed to basic and acidic residues. Polar residues predominate over residues 79–92 (YSSSNHAQEQSSEE). Residues 169–181 (SFSSSSEASDSKS) are compositionally biased toward low complexity. The span at 363 to 375 (RSPSETKQYSPDA) shows a compositional bias: polar residues. Positions 616-629 (QYGHMSSSQNPHSE) are enriched in polar residues. The span at 630 to 639 (TQNRSEEVRG) shows a compositional bias: basic and acidic residues. Residues 645–704 (RKWNRAVFSLMQRRGLEKSFQSQKYVAKPERRKLADALSLTDAQVKIWFQNRRMKWRQEI) constitute a DNA-binding region (homeobox). A disordered region spans residues 722–741 (EIEKEKTQTPSDEGEVINVD).

This sequence belongs to the H2.0 homeobox family. In terms of tissue distribution, expressed in the tissues of endodermal origin.

It is found in the nucleus. This is Homeobox protein AHox1 (AHOX1) from Halocynthia roretzi (Sea squirt).